The primary structure comprises 190 residues: dITP/XTP pyrophosphatase (190 aa).

10–15 provides a ligand contact to substrate; sequence TTNKHK. Mg(2+)-binding residues include glutamate 39 and aspartate 68. Aspartate 68 serves as the catalytic Proton acceptor. Residues alanine 69, 143-146, lysine 166, and 171-172 contribute to the substrate site; these read FGYD and HR.

Belongs to the HAM1 NTPase family. As to quaternary structure, homodimer. It depends on Mg(2+) as a cofactor.

It carries out the reaction XTP + H2O = XMP + diphosphate + H(+). It catalyses the reaction dITP + H2O = dIMP + diphosphate + H(+). The catalysed reaction is ITP + H2O = IMP + diphosphate + H(+). Its function is as follows. Pyrophosphatase that catalyzes the hydrolysis of nucleoside triphosphates to their monophosphate derivatives, with a high preference for the non-canonical purine nucleotides XTP (xanthosine triphosphate), dITP (deoxyinosine triphosphate) and ITP. Seems to function as a house-cleaning enzyme that removes non-canonical purine nucleotides from the nucleotide pool, thus preventing their incorporation into DNA/RNA and avoiding chromosomal lesions. The sequence is that of dITP/XTP pyrophosphatase from Hyperthermus butylicus (strain DSM 5456 / JCM 9403 / PLM1-5).